Consider the following 441-residue polypeptide: UDP-N-acetylglucosamine--N-acetylmuramyl-(pentapeptide) pyrophosphoryl-undecaprenol N-acetylglucosamine transferase (441 aa).

Residues 28–30 (TGG), N140, R176, S204, I257, and Q302 each bind UDP-N-acetyl-alpha-D-glucosamine.

This sequence belongs to the glycosyltransferase 28 family. MurG subfamily.

The protein resides in the cell inner membrane. It catalyses the reaction di-trans,octa-cis-undecaprenyl diphospho-N-acetyl-alpha-D-muramoyl-L-alanyl-D-glutamyl-meso-2,6-diaminopimeloyl-D-alanyl-D-alanine + UDP-N-acetyl-alpha-D-glucosamine = di-trans,octa-cis-undecaprenyl diphospho-[N-acetyl-alpha-D-glucosaminyl-(1-&gt;4)]-N-acetyl-alpha-D-muramoyl-L-alanyl-D-glutamyl-meso-2,6-diaminopimeloyl-D-alanyl-D-alanine + UDP + H(+). It functions in the pathway cell wall biogenesis; peptidoglycan biosynthesis. In terms of biological role, cell wall formation. Catalyzes the transfer of a GlcNAc subunit on undecaprenyl-pyrophosphoryl-MurNAc-pentapeptide (lipid intermediate I) to form undecaprenyl-pyrophosphoryl-MurNAc-(pentapeptide)GlcNAc (lipid intermediate II). This Xanthomonas oryzae pv. oryzae (strain KACC10331 / KXO85) protein is UDP-N-acetylglucosamine--N-acetylmuramyl-(pentapeptide) pyrophosphoryl-undecaprenol N-acetylglucosamine transferase.